A 584-amino-acid polypeptide reads, in one-letter code: Pescadillo homolog (584 aa).

Residues 1–54 (MGGLEKKKYERGSATNYITRNKARKKLQLSLPDFRRLCILKGIYPHEPKHKKKV) form a required for 28S ribosomal RNA processing region. Positions 1 to 257 (MGGLEKKKYE…PKLEGQAQAE (257 aa)) are sufficient for nucleolar localization. At K98 the chain carries N6-acetyllysine. The sufficient for interaction with MAP1B stretch occupies residues 312-414 (RKKELEAQEK…LLLPVAEYFP (103 aa)). Positions 321 to 414 (KHKKLFEGLK…LLLPVAEYFP (94 aa)) constitute a BRCT domain. The disordered stretch occupies residues 449-510 (DPGHLEEEEE…EEKKPQVMAG (62 aa)). The span at 454–489 (EEEEEEDEDDDNEGDVAAENEEEDVEVESEEEEEEE) shows a compositional bias: acidic residues. Over residues 496–505 (EQHRLEEKKP) the composition is skewed to basic and acidic residues. K513 is covalently cross-linked (Glycyl lysine isopeptide (Lys-Gly) (interchain with G-Cter in SUMO1); alternate). A Glycyl lysine isopeptide (Lys-Gly) (interchain with G-Cter in SUMO2); alternate cross-link involves residue K513. The segment at 535–584 (MMKKREKYLYQKIMFGKRRKIREANKLAEKRKAHDDAVRSEKKAKRTRPV) is required for 28S ribosomal RNA processing. Positions 560–575 (KLAEKRKAHDDAVRSE) are enriched in basic and acidic residues. A disordered region spans residues 560-584 (KLAEKRKAHDDAVRSEKKAKRTRPV).

The protein belongs to the pescadillo family. Component of the PeBoW complex, composed of BOP1, PES1 and WDR12. The complex is held together by BOP1, which interacts with PES1 via its N-terminal domain and with WDR12 via a high-affinity interaction between the seven-bladed beta-propeller domains of the 2 proteins. The PeBoW complex associates with the 66S pre-ribosome. The PeBoW complex also associates with DDX27, PES1 interacts directly with DDX27. Interacts with IRS1 and UBTF. May interact with MAP1B. Post-translationally, sumoylated. In terms of tissue distribution, ubiquitous. Highest levels appear to be found in tissues that contain a population of proliferating cells, such as ovary and testis. Also appears to be highly expressed in kidney and liver. In the brain expression is restricted to neural progenitor cells and postmitotic neurons. Highly expressed in malignant astrocytes.

Its subcellular location is the nucleus. It localises to the nucleolus. The protein resides in the nucleoplasm. It is found in the chromosome. Functionally, component of the PeBoW complex, which is required for maturation of 28S and 5.8S ribosomal RNAs and formation of the 60S ribosome. The sequence is that of Pescadillo homolog (Pes1) from Mus musculus (Mouse).